The sequence spans 388 residues: Glycoprotein-N-acetylgalactosamine 3-beta-galactosyltransferase 1 (388 aa).

Over 1–12 (MAPISHYIGKTS) the chain is Cytoplasmic. A helical; Signal-anchor for type II membrane protein transmembrane segment spans residues 13 to 30 (LTTLAIGIAIGITVSNIV). At 31–388 (KFSSTQRRHF…LAQTDSKHIS (358 aa)) the chain is on the lumenal side. The interval 43–65 (SGYIPDSPHSHGENDFVEGPDDS) is disordered. N80 is a glycosylation site (N-linked (GlcNAc...) asparagine). C95 and C119 form a disulfide bridge. UDP is bound by residues M98, N100, E142, G143, R144, K150, and D173. Residues D173 and D175 each coordinate Mn(2+). Cysteines 238 and 253 form a disulfide. W292 provides a ligand contact to a glycoprotein. C307 and C308 form a disulfide bridge. UDP-binding residues include H316 and Y317. A Mn(2+)-binding site is contributed by H316. The segment at 344–388 (STEEQDHGSSHKDTDAMKPEGKGMEDKEDEETNISLAQTDSKHIS) is disordered. Over residues 347–368 (EQDHGSSHKDTDAMKPEGKGME) the composition is skewed to basic and acidic residues. N376 is a glycosylation site (N-linked (GlcNAc...) asparagine).

It belongs to the glycosyltransferase 31 family. Beta3-Gal-T subfamily. Homodimer; disulfide-linked. It depends on Mn(2+) as a cofactor.

Its subcellular location is the membrane. The catalysed reaction is an N-acetyl-alpha-D-galactosaminyl derivative + UDP-alpha-D-galactose = a beta-D-galactosyl-(1-&gt;3)-N-acetyl-alpha-D-galactosaminyl derivative + UDP + H(+). It participates in protein modification; protein glycosylation. Its function is as follows. Glycosyltransferase that generates the core 1 O-glycan Gal-beta1-3GalNAc-alpha1-Ser/Thr (T antigen), which is a precursor for many extended O-glycans in glycoproteins. The protein is Glycoprotein-N-acetylgalactosamine 3-beta-galactosyltransferase 1 of Biomphalaria glabrata (Bloodfluke planorb).